Reading from the N-terminus, the 333-residue chain is Ribosomal RNA small subunit methyltransferase C (333 aa).

This sequence belongs to the methyltransferase superfamily. RsmC family. In terms of assembly, monomer.

It localises to the cytoplasm. The enzyme catalyses guanosine(1207) in 16S rRNA + S-adenosyl-L-methionine = N(2)-methylguanosine(1207) in 16S rRNA + S-adenosyl-L-homocysteine + H(+). Functionally, specifically methylates the guanine in position 1207 of 16S rRNA in the 30S particle. This Chromohalobacter salexigens (strain ATCC BAA-138 / DSM 3043 / CIP 106854 / NCIMB 13768 / 1H11) protein is Ribosomal RNA small subunit methyltransferase C.